A 74-amino-acid polypeptide reads, in one-letter code: DNA-directed RNA polymerase subunit omega (74 aa).

It belongs to the RNA polymerase subunit omega family. As to quaternary structure, the RNAP catalytic core consists of 2 alpha, 1 beta, 1 beta' and 1 omega subunit. When a sigma factor is associated with the core the holoenzyme is formed, which can initiate transcription.

The enzyme catalyses RNA(n) + a ribonucleoside 5'-triphosphate = RNA(n+1) + diphosphate. In terms of biological role, promotes RNA polymerase assembly. Latches the N- and C-terminal regions of the beta' subunit thereby facilitating its interaction with the beta and alpha subunits. This chain is DNA-directed RNA polymerase subunit omega, found in Helicobacter pylori (strain P12).